A 367-amino-acid polypeptide reads, in one-letter code: AdoMet-dependent heme synthase (367 aa).

Residues 15-238 (DGSPTCKLIA…TSMHLKATCA (224 aa)) form the Radical SAM core domain. The [4Fe-4S] cluster site is built by cysteine 31, cysteine 35, and cysteine 38.

This sequence belongs to the radical SAM superfamily. It depends on [4Fe-4S] cluster as a cofactor.

It catalyses the reaction Fe-coproporphyrin III + 2 S-adenosyl-L-methionine = heme b + 2 5'-deoxyadenosine + 2 L-methionine + 2 CO2. It participates in porphyrin-containing compound metabolism; protoheme biosynthesis. Functionally, involved in siroheme-dependent heme b biosynthesis. Catalyzes the conversion of Fe-coproporphyrin III into heme by the oxidative decarboxylation of two propionate side chains. The sequence is that of AdoMet-dependent heme synthase from Nitratidesulfovibrio vulgaris (strain ATCC 29579 / DSM 644 / CCUG 34227 / NCIMB 8303 / VKM B-1760 / Hildenborough) (Desulfovibrio vulgaris).